The chain runs to 246 residues: MMKSQAALLGLTTLAILFFSGAHAAKITFTNKCSYTVWPGTLTGDQKPQLSLTGFELATGISRSVDAPSPWSGRFFGRTRCSTDASGKFTCATADCGSGQVSCNGNGAAPPATLVEITIASNGGQDFYDVSLVDGFNLPMSVAPQGGTGKCKASTCPADINKVCPAPLQVKGSDGSVIACKSACLAFNQPKYCCTPPNDKPETCPPPDYSKLFKTQCPQAYSYAYDDKSSTFTCSGRPAYLITFCP.

An N-terminal signal peptide occupies residues 1 to 24 (MMKSQAALLGLTTLAILFFSGAHA). 8 disulfides stabilise this stretch: C33-C245, C81-C91, C96-C103, C151-C234, C156-C217, C164-C180, C184-C193, and C194-C204.

The protein belongs to the thaumatin family. Equally expressed in the abscission zone and surrounding tissues of both fruitlets and leaves.

Its subcellular location is the secreted. Functionally, may be involved in protecting plant tissues from pathogen infection. The protein is Thaumatin-like protein 1 of Prunus persica (Peach).